Reading from the N-terminus, the 346-residue chain is Holliday junction branch migration complex subunit RuvB (346 aa).

The tract at residues 1 to 181 (MSDRNPLIDA…FGIPTRLNFY (181 aa)) is large ATPase domain (RuvB-L). Residues L20, R21, G62, K65, T66, T67, 128-130 (EDF), R171, Y181, and R218 each bind ATP. T66 serves as a coordination point for Mg(2+). The interval 182-252 (TVEELEYIVR…IADEALSRLE (71 aa)) is small ATPAse domain (RuvB-S). Residues 255-346 (NRGLDQLDRR…SQYGLFMEDE (92 aa)) form a head domain (RuvB-H) region. DNA contacts are provided by R291, R310, and R315.

This sequence belongs to the RuvB family. As to quaternary structure, homohexamer. Forms an RuvA(8)-RuvB(12)-Holliday junction (HJ) complex. HJ DNA is sandwiched between 2 RuvA tetramers; dsDNA enters through RuvA and exits via RuvB. An RuvB hexamer assembles on each DNA strand where it exits the tetramer. Each RuvB hexamer is contacted by two RuvA subunits (via domain III) on 2 adjacent RuvB subunits; this complex drives branch migration. In the full resolvosome a probable DNA-RuvA(4)-RuvB(12)-RuvC(2) complex forms which resolves the HJ.

The protein localises to the cytoplasm. It catalyses the reaction ATP + H2O = ADP + phosphate + H(+). Functionally, the RuvA-RuvB-RuvC complex processes Holliday junction (HJ) DNA during genetic recombination and DNA repair, while the RuvA-RuvB complex plays an important role in the rescue of blocked DNA replication forks via replication fork reversal (RFR). RuvA specifically binds to HJ cruciform DNA, conferring on it an open structure. The RuvB hexamer acts as an ATP-dependent pump, pulling dsDNA into and through the RuvAB complex. RuvB forms 2 homohexamers on either side of HJ DNA bound by 1 or 2 RuvA tetramers; 4 subunits per hexamer contact DNA at a time. Coordinated motions by a converter formed by DNA-disengaged RuvB subunits stimulates ATP hydrolysis and nucleotide exchange. Immobilization of the converter enables RuvB to convert the ATP-contained energy into a lever motion, pulling 2 nucleotides of DNA out of the RuvA tetramer per ATP hydrolyzed, thus driving DNA branch migration. The RuvB motors rotate together with the DNA substrate, which together with the progressing nucleotide cycle form the mechanistic basis for DNA recombination by continuous HJ branch migration. Branch migration allows RuvC to scan DNA until it finds its consensus sequence, where it cleaves and resolves cruciform DNA. The sequence is that of Holliday junction branch migration complex subunit RuvB from Brucella anthropi (strain ATCC 49188 / DSM 6882 / CCUG 24695 / JCM 21032 / LMG 3331 / NBRC 15819 / NCTC 12168 / Alc 37) (Ochrobactrum anthropi).